An 802-amino-acid chain; its full sequence is MPRIMIKGGVWRNTEDEILKAAVMKYGKNQWSRIASLLHRKSAKQCKARWYEWLDPSIKKTEWSREEEEKLLHLAKLMPTQWRTIAPIIGRTAAQCLEHYEFLLDKAAQRDNEEETTDDPRKLKPGEIDPNPETKPARPDPIDMDEDELEMLSEARARLANTQGKKAKRKAREKQLEEARRLAALQKRRELRAAGIEIQKKRKKKRGVDYNAEIPFEKKPALGFYDTSEENYQTLDADFRKLRQQDLDGELRSEKEGRDRKKDKQHLKRKKESDLPSAILQTSGVSEFTKKRSKLVLPAPQISDAELQEVVKVGQASEIARQTAEESGITNSASSTLLSEYNVTNNSIALRTPRTPASQDRILQEAQNLMALTNVDTPLKGGLNTPLHESDFSGVTPQRQVVQTPNTVLSTPFRTPSHGSEGLTPRSGTTPKPVINSTPGRTPLRDKLNINPEDGMADYSDPSYVKQMERESREHLRLGLLGLPAPKNDFEIVLPENAEKELEEREIDDTYIEDAADVDARKQAIRDAERVKEMKRMHKAVQKDLPRPSEVNETILRPLNVEPPLTDLQKSEELIKKEMITMLHYDLLHHPYEPSGNKKGKTVGFGTNNAEHIAYLEHNPYEKFSKEELKKAQDVLVQEMEVVKQGMSHGELSSEAYNQVWEECYSQVLYLPGQSRYTRANLASKKDRIESLEKRLEINRGHMTTEAKRAAKMEKKMKILLGGYQSRAMGLMKQLNDLWDQIEQAYLELRTFEELKKHEDSAIPRRLECLKEDVQRQQEREKELQHRYADLLLEKETLKAKF.

HTH myb-type domains lie at 1 to 56 (MPRI…WLDP) and 57 to 108 (SIKK…DKAA). 2 consecutive DNA-binding regions (H-T-H motif) follow at residues 31–54 (WSRI…YEWL) and 82–104 (WRTI…EFLL). The interval 108–143 (AQRDNEEETTDDPRKLKPGEIDPNPETKPARPDPID) is disordered. Over residues 118 to 127 (DDPRKLKPGE) the composition is skewed to basic and acidic residues. Residue Lys135 forms a Glycyl lysine isopeptide (Lys-Gly) (interchain with G-Cter in SUMO2) linkage. Residues 142 to 245 (IDMDEDELEM…DADFRKLRQQ (104 aa)) adopt a coiled-coil conformation. The short motif at 165 to 271 (KKAKRKAREK…KDKQHLKRKK (107 aa)) is the Nuclear localization signal element. The interval 200–206 (KKRKKKR) is required for interaction with CTNNBL1. A Glycyl lysine isopeptide (Lys-Gly) (interchain with G-Cter in SUMO2) cross-link involves residue Lys219. Thr227 bears the Phosphothreonine mark. A compositionally biased stretch (basic and acidic residues) spans 246–262 (DLDGELRSEKEGRDRKK). Residues 246–278 (DLDGELRSEKEGRDRKKDKQHLKRKKESDLPSA) are disordered. The tract at residues 260–606 (RKKDKQHLKR…NKKGKTVGFG (347 aa)) is interaction with PPP1R8. Residues Ser303 and Ser358 each carry the phosphoserine modification. Thr377, Thr385, Thr396, Thr404, Thr411, and Thr415 each carry phosphothreonine. Over residues 409-418 (LSTPFRTPSH) the composition is skewed to polar residues. The disordered stretch occupies residues 409–459 (LSTPFRTPSHGSEGLTPRSGTTPKPVINSTPGRTPLRDKLNINPEDGMADY). The residue at position 417 (Ser417) is a Phosphoserine. Phosphothreonine is present on residues Thr424 and Thr430. A compositionally biased stretch (polar residues) spans 426–440 (RSGTTPKPVINSTPG). Ser437 carries the post-translational modification Phosphoserine. Phosphothreonine occurs at positions 438 and 442. Lys487 is covalently cross-linked (Glycyl lysine isopeptide (Lys-Gly) (interchain with G-Cter in SUMO2)). An interaction with DAPK3 region spans residues 501–659 (ELEEREIDDT…GELSSEAYNQ (159 aa)). Coiled coils occupy residues 676-701 (RYTR…INRG) and 764-802 (PRRL…KAKF). Residues 706–800 (EAKRAAKMEK…LLLEKETLKA (95 aa)) are interaction with PLRG1.

It belongs to the CEF1 family. As to quaternary structure, homodimer. Interacts with DAPK3. Component of the precatalytic, catalytic and postcatalytic spliceosome complexes. Part of a spliceosomal 'core' complex consisting of CDC5L, PLRG1, SPF27, CCAP1, CCAP3 and CCAP6. Interacts with PLRG1, Lodestar/TTF2, and NIPP1/PPP1R8. Component of the minor spliceosome, which splices U12-type introns. Within this complex, interacts with SCNM1. Component of the PRP19-CDC5L splicing complex composed of a core complex comprising a homotetramer of PRPF19, CDC5L, PLRG1 and BCAS2, and at least three less stably associated proteins CTNNBL1, CWC15 and HSPA8. Interacts (via its C-terminus) directly in the complex with PRPF19 and BCAS2. Interacts (via its C-terminus) directly with PRGL1 (via its WD40 repeat domain); the interaction is required for mRNA splicing but not for spliceosome assembly. Also interacts with CTNNBL1. Interacts with PRPF19 (via N-terminus). Interacts with USB1. Interacts with DDX41. In terms of processing, phosphorylated on serine and threonine residues. Phosphorylation on Thr-411 and Thr-438 is required for CDC5L-mediated mRNA splicing. Has no effect on subcellular location nor on homodimerization. Phosphorylated in vitro by CDK2. Phosphorylation enhances interaction with PPP1R8.

The protein resides in the nucleus. It is found in the nucleus speckle. It localises to the cytoplasm. DNA-binding protein involved in cell cycle control. May act as a transcription activator. Plays a role in pre-mRNA splicing as core component of precatalytic, catalytic and postcatalytic spliceosomal complexes. Component of the PRP19-CDC5L complex that forms an integral part of the spliceosome and is required for activating pre-mRNA splicing. The PRP19-CDC5L complex may also play a role in the response to DNA damage (DDR). As a component of the minor spliceosome, involved in the splicing of U12-type introns in pre-mRNAs. The protein is Cell division cycle 5-like protein (CDC5L) of Bos taurus (Bovine).